We begin with the raw amino-acid sequence, 424 residues long: Glutamate-1-semialdehyde 2,1-aminomutase (424 aa).

The residue at position 263 (K263) is an N6-(pyridoxal phosphate)lysine.

The protein belongs to the class-III pyridoxal-phosphate-dependent aminotransferase family. HemL subfamily. Homodimer. Pyridoxal 5'-phosphate is required as a cofactor.

It localises to the cytoplasm. It carries out the reaction (S)-4-amino-5-oxopentanoate = 5-aminolevulinate. It participates in porphyrin-containing compound metabolism; protoporphyrin-IX biosynthesis; 5-aminolevulinate from L-glutamyl-tRNA(Glu): step 2/2. The chain is Glutamate-1-semialdehyde 2,1-aminomutase from Campylobacter jejuni (strain RM1221).